Reading from the N-terminus, the 568-residue chain is Natural resistance-associated macrophage protein 2 (568 aa).

The segment at 1-40 (MVLGPEQKMSDDSVSGDHGESASLGNINPAYSNPSLSQSP) is disordered. At 1–69 (MVLGPEQKMS…EEYSCFSFRK (69 aa)) the chain is on the cytoplasmic side. Residues 8–20 (KMSDDSVSGDHGE) show a composition bias toward basic and acidic residues. The segment covering 23 to 40 (SLGNINPAYSNPSLSQSP) has biased composition (polar residues). Residues 70–90 (LWAFTGPGFLMSIAYLDPGNI) form a helical membrane-spanning segment. The Extracellular portion of the chain corresponds to 91–96 (ESDLQS). The helical transmembrane segment at 97-117 (GAVAGFKLLWILLLATLVGLL) threads the bilayer. Residues 118–154 (LQRLAARLGVVTGLHLAEVCHRQYPKVPRVILWLMVE) are Cytoplasmic-facing. A helical membrane pass occupies residues 155–175 (LAIIGSDMQEVIGSAIAINLL). The Extracellular portion of the chain corresponds to 176-179 (SVGR). The chain crosses the membrane as a helical span at residues 180 to 200 (IPLWGGVLITIADTFVFLFLD). The Cytoplasmic segment spans residues 201 to 208 (KYGLRKLE). Residues 209 to 229 (AFFGFLITIMALTFGYEYVTV) form a helical membrane-spanning segment. The Extracellular portion of the chain corresponds to 230–255 (KPSQSQVLKGMFVPSCSGCRTPQIEQ). The helical transmembrane segment at 256 to 276 (AVGIVGAVIMPHNMYLHSALV) threads the bilayer. Residues 277-301 (KSRQVNRNNKQEVREANKYFFIESC) lie on the Cytoplasmic side of the membrane. The chain crosses the membrane as a helical span at residues 302–322 (IALFVSFIINVFVVSVFAEAF). Residues 323–360 (FGKTNEQVVEVCTNTSSPHAGLFPKDNSTLAVDIYKGG) lie on the Extracellular side of the membrane. N-linked (GlcNAc...) asparagine glycosylation is found at Asn336 and Asn349. The helical transmembrane segment at 361-381 (VVLGCYFGPAALYIWAVGILA) threads the bilayer. Over 382–408 (AGQSSTMTGTYSGQFVMEGFLNLKWSR) the chain is Cytoplasmic. The chain crosses the membrane as a helical span at residues 409-429 (FARVVLTRSIAIIPTLLVAVF). The Extracellular portion of the chain corresponds to 430 to 440 (QDVEHLTGMND). A helical transmembrane segment spans residues 441–461 (FLNVLQSLQLPFALIPILTFT). At 462–482 (SLRPVMSDFANGLGWRIAGGI) the chain is on the cytoplasmic side. Residues 483-503 (LVLIICSINMYFVVVYVRDLG) form a helical membrane-spanning segment. Residues 504 to 506 (HVA) are Extracellular-facing. A helical transmembrane segment spans residues 507–527 (LYVVAAVVSVAYLGFVFYLGW). Residues 528-568 (QCLIALGMSFLDCGHTCHLGLTAQPELYLLNTMDADSLVSR) are Cytoplasmic-facing. Residues 555–559 (YLLNT) are required for early endosome targeting. Residues Ser564 and Ser567 each carry the phosphoserine modification.

It belongs to the NRAMP family. As to quaternary structure, forms a complex with NDFIP1 and NEDD4L, in cortical neurons, in response to iron and cobalt exposure; this interaction leads to SLC11A2 ubiquitination by NEDD4L and proteasome-dependent degradation. Interacts with NDFIP1, NDFIP2 and WWP2; this interaction leads to SLC11A2 ubiquitination by WWP2 and subsequent proteasome-dependent degradation. Interacts with COX2 and TOM6 at the outer mitochondrion membrane. Interacts with ARRDC1; this interaction regulates the incorporation of SLC11A2 into extracellular vesicles through an ubiquitination-dependent mechanism. Interacts with ARRDC4; controls the incorporation of SLC11A2 into extracellular vesicles through an ubiquitination-dependent mechanism. In terms of processing, ubiquitinated by WWP2. N-glycosylated. As to expression, ubiquitously expressed. Expressed in erythroid progenitors.

The protein localises to the early endosome membrane. It is found in the apical cell membrane. The protein resides in the late endosome membrane. It localises to the lysosome membrane. Its subcellular location is the cell membrane. The protein localises to the extracellular vesicle membrane. It is found in the mitochondrion outer membrane. The protein resides in the golgi apparatus. It localises to the trans-Golgi network membrane. Its subcellular location is the recycling endosome membrane. The catalysed reaction is Fe(2+)(in) + H(+)(in) = Fe(2+)(out) + H(+)(out). The enzyme catalyses Co(2+)(out) + H(+)(out) = Co(2+)(in) + H(+)(in). It carries out the reaction Cd(2+)(out) + H(+)(out) = Cd(2+)(in) + H(+)(in). It catalyses the reaction Mn(2+)(in) + H(+)(in) = Mn(2+)(out) + H(+)(out). The catalysed reaction is Zn(2+)(out) + H(+)(out) = Zn(2+)(in) + H(+)(in). The enzyme catalyses Ni(2+)(out) + H(+)(out) = Ni(2+)(in) + H(+)(in). It carries out the reaction H(+)(in) = H(+)(out). It catalyses the reaction Fe(2+)(in) = Fe(2+)(out). Functionally, proton-coupled metal ion symporter operating with a proton to metal ion stoichiometry of 1:1. Selectively transports various divalent metal cations, in decreasing affinity: Cd(2+) &gt; Fe(2+) &gt; Co(2+), Mn(2+) &gt;&gt; Zn(2+), Ni(2+), VO(2+). Essential for maintenance of iron homeostasis by modulating intestinal absorption of dietary Fe(2+) and TF-associated endosomal Fe(2+) transport in erythroid precursors and other cells. Enables Fe(2+) and Mn(2+) ion entry into mitochondria, and is thus expected to promote mitochondrial heme synthesis, iron-sulfur cluster biogenesis and antioxidant defense. Can mediate uncoupled fluxes of either protons or metal ions. The chain is Natural resistance-associated macrophage protein 2 (SLC11A2) from Homo sapiens (Human).